Consider the following 2183-residue polypeptide: Genome polyprotein (2183 aa).

Glycine 2 carries N-myristoyl glycine; by host lipidation. At 2-1493 (GAQVSTQKTG…HVSRAFICLQ (1492 aa)) the chain is on the cytoplasmic side. The tract at residues 566–582 (FYQGPTEESVERAMGRV) is amphipathic alpha-helix. Active-site for protease 2A activity residues include histidine 870 and aspartate 888. Positions 905 and 907 each coordinate Zn(2+). The active-site For protease 2A activity is cysteine 959. The Zn(2+) site is built by cysteine 965 and histidine 967. Residues 1099–1171 (NNGWLKKFTE…EQSAPSQSDQ (73 aa)) are membrane-binding. Positions 1099-1237 (NNGWLKKFTE…SPGAGKSVAT (139 aa)) are oligomerization. The tract at residues 1120 to 1124 (AVKIQ) is RNA-binding. An SF3 helicase domain is found at 1203-1359 (EKKMSNYIQF…SMYSQNGKIN (157 aa)). Cysteine 1367, cysteine 1379, and cysteine 1384 together coordinate Zn(2+). The segment at 1367 to 1384 (CDEECCPVNFKRCCPLVC) adopts a C4-type; degenerate zinc-finger fold. The tract at residues 1411 to 1418 (EYNHRHSV) is RNA-binding. The tract at residues 1422–1427 (LEALFQ) is oligomerization. The stretch at 1494 to 1509 (ALTTFVSVAGIIYIIY) is an intramembrane region. Residues 1510-2183 (KLFAGFQGAY…TLRRKWLDSF (674 aa)) lie on the Cytoplasmic side of the membrane. Tyrosine 1519 carries the post-translational modification O-(5'-phospho-RNA)-tyrosine. The 179-residue stretch at 1539-1717 (GPAFEFAVAM…FSAGLLKHYF (179 aa)) folds into the Peptidase C3 domain. Active-site for protease 3C activity residues include histidine 1578, glutamate 1609, and cysteine 1685. Positions 1948–2064 (GHLIAFDYSG…SYPWPIDASL (117 aa)) constitute a RdRp catalytic domain. Aspartate 1954 and aspartate 2050 together coordinate Mg(2+).

It belongs to the picornaviruses polyprotein family. Interacts with capsid protein VP1 and capsid protein VP3 to form heterotrimeric protomers. In terms of assembly, interacts with capsid protein VP0, and capsid protein VP3 to form heterotrimeric protomers. Five protomers subsequently associate to form pentamers which serve as building blocks for the capsid. Interacts with capsid protein VP2, capsid protein VP3 and capsid protein VP4 following cleavage of capsid protein VP0. Interacts with host CXADR. As to quaternary structure, interacts with capsid protein VP1 and capsid protein VP3 in the mature capsid. Interacts with capsid protein VP0 and capsid protein VP1 to form heterotrimeric protomers. Five protomers subsequently associate to form pentamers which serve as building blocks for the capsid. Interacts with capsid protein VP4 in the mature capsid. Interacts with protein 2C; this interaction may be important for virion morphogenesis. In terms of assembly, interacts with capsid protein VP1 and capsid protein VP3. As to quaternary structure, homodimer. Homohexamer; forms a hexameric ring structure with 6-fold symmetry characteristic of AAA+ ATPases. Interacts (via N-terminus) with host RTN3 (via reticulon domain); this interaction is important for viral replication. Interacts with capsid protein VP3; this interaction may be important for virion morphogenesis. In terms of assembly, interacts with protein 3CD. As to quaternary structure, homodimer. Interacts with host GBF1. Interacts (via GOLD domain) with host ACBD3 (via GOLD domain); this interaction allows the formation of a viral protein 3A/ACBD3 heterotetramer with a 2:2 stoichiometry, which will stimulate the recruitment of host PI4KB in order to synthesize PI4P at the viral RNA replication sites. Interacts with RNA-directed RNA polymerase. In terms of assembly, interacts with protein 3AB and with RNA-directed RNA polymerase. As to quaternary structure, interacts with Viral protein genome-linked and with protein 3CD. Mg(2+) serves as cofactor. Specific enzymatic cleavages in vivo by the viral proteases yield processing intermediates and the mature proteins. In terms of processing, myristoylation is required for the formation of pentamers during virus assembly. Further assembly of 12 pentamers and a molecule of genomic RNA generates the provirion. Post-translationally, during virion maturation, immature virions are rendered infectious following cleavage of VP0 into VP4 and VP2. This maturation seems to be an autocatalytic event triggered by the presence of RNA in the capsid and it is followed by a conformational change infectious virion. Myristoylation is required during RNA encapsidation and formation of the mature virus particle. In terms of processing, VPg is uridylylated by the polymerase into VPg-pUpU. This acts as a nucleotide-peptide primer for the genomic RNA replication.

The protein resides in the virion. It is found in the host cytoplasm. It localises to the host cytoplasmic vesicle membrane. Its subcellular location is the host nucleus. The catalysed reaction is a ribonucleoside 5'-triphosphate + H2O = a ribonucleoside 5'-diphosphate + phosphate + H(+). The enzyme catalyses Selective cleavage of Tyr-|-Gly bond in the picornavirus polyprotein.. It catalyses the reaction RNA(n) + a ribonucleoside 5'-triphosphate = RNA(n+1) + diphosphate. It carries out the reaction Selective cleavage of Gln-|-Gly bond in the poliovirus polyprotein. In other picornavirus reactions Glu may be substituted for Gln, and Ser or Thr for Gly.. Replication or transcription is subject to high level of random mutations by the nucleotide analog ribavirin. Functionally, forms an icosahedral capsid of pseudo T=3 symmetry with capsid proteins VP2 and VP3. The capsid is 300 Angstroms in diameter, composed of 60 copies of each capsid protein and enclosing the viral positive strand RNA genome. Capsid protein VP1 mainly forms the vertices of the capsid. Capsid protein VP1 interacts with host CXADR to provide virion attachment to target host cells. This attachment induces virion internalization. Tyrosine kinases are probably involved in the entry process. After binding to its receptor, the capsid undergoes conformational changes. Capsid protein VP1 N-terminus (that contains an amphipathic alpha-helix) and capsid protein VP4 are externalized. Together, they shape a pore in the host membrane through which viral genome is translocated to host cell cytoplasm. Forms an icosahedral capsid of pseudo T=3 symmetry with capsid proteins VP2 and VP3. The capsid is 300 Angstroms in diameter, composed of 60 copies of each capsid protein and enclosing the viral positive strand RNA genome. Its function is as follows. Lies on the inner surface of the capsid shell. After binding to the host receptor, the capsid undergoes conformational changes. Capsid protein VP4 is released, Capsid protein VP1 N-terminus is externalized, and together, they shape a pore in the host membrane through which the viral genome is translocated into the host cell cytoplasm. In terms of biological role, component of immature procapsids, which is cleaved into capsid proteins VP4 and VP2 after maturation. Allows the capsid to remain inactive before the maturation step. Functionally, cysteine protease that cleaves viral polyprotein and specific host proteins. It is responsible for the autocatalytic cleavage between the P1 and P2 regions, which is the first cleavage occurring in the polyprotein. Also cleaves the host translation initiation factor EIF4G1, in order to shut down the capped cellular mRNA translation. Inhibits the host nucleus-cytoplasm protein and RNA trafficking by cleaving host members of the nuclear pores. Counteracts stress granule formation probably by antagonizing its assembly or promoting its dissassembly. Cleaves and inhibits host IFIH1/MDA5, thereby inhibiting the type-I IFN production and the establishment of the antiviral state. Cleaves and inhibits host MAVS, thereby inhibiting the type-I IFN production and the establishment of the antiviral state. Plays an essential role in the virus replication cycle by acting as a viroporin. Creates a pore in the host endoplasmic reticulum and as a consequence releases Ca2+ in the cytoplasm of infected cell. In turn, high levels of cytoplasmic calcium may trigger membrane trafficking and transport of viral ER-associated proteins to viroplasms, sites of viral genome replication. Its function is as follows. Induces and associates with structural rearrangements of intracellular membranes. Displays RNA-binding, nucleotide binding and NTPase activities. May play a role in virion morphogenesis and viral RNA encapsidation by interacting with the capsid protein VP3. In terms of biological role, localizes the viral replication complex to the surface of membranous vesicles. Together with protein 3CD binds the Cis-Active RNA Element (CRE) which is involved in RNA synthesis initiation. Acts as a cofactor to stimulate the activity of 3D polymerase, maybe through a nucleid acid chaperone activity. Functionally, localizes the viral replication complex to the surface of membranous vesicles. It inhibits host cell endoplasmic reticulum-to-Golgi apparatus transport and causes the disassembly of the Golgi complex, possibly through GBF1 interaction. This would result in depletion of MHC, trail receptors and IFN receptors at the host cell surface. Plays an essential role in viral RNA replication by recruiting ACBD3 and PI4KB at the viral replication sites, thereby allowing the formation of the rearranged membranous structures where viral replication takes place. Acts as a primer for viral RNA replication and remains covalently bound to viral genomic RNA. VPg is uridylylated prior to priming replication into VPg-pUpU. The oriI viral genomic sequence may act as a template for this. The VPg-pUpU is then used as primer on the genomic RNA poly(A) by the RNA-dependent RNA polymerase to replicate the viral genome. During genome replication, the VPg-RNA linkage is removed by the host TDP2, thereby accelerating replication. During the late stage of the replication cycle, host TDP2 is excluded from sites of viral RNA synthesis and encapsidation, allowing for the generation of progeny virions. Its function is as follows. Involved in the viral replication complex and viral polypeptide maturation. It exhibits protease activity with a specificity and catalytic efficiency that is different from protease 3C. Protein 3CD lacks polymerase activity. Protein 3CD binds to the 5'UTR of the viral genome. In terms of biological role, replicates the viral genomic RNA on the surface of intracellular membranes. May form linear arrays of subunits that propagate along a strong head-to-tail interaction called interface-I. Covalently attaches UMP to a tyrosine of VPg, which is used to prime RNA synthesis. The positive stranded RNA genome is first replicated at virus induced membranous vesicles, creating a dsRNA genomic replication form. This dsRNA is then used as template to synthesize positive stranded RNA genomes. ss(+)RNA genomes are either translated, replicated or encapsidated. Functionally, major viral protease that mediates proteolytic processing of the polyprotein. Cleaves host EIF5B, contributing to host translation shutoff. Also cleaves host PABPC1, contributing to host translation shutoff. Cleaves host NLRP1, triggers host N-glycine-mediated degradation of the autoinhibitory NLRP1 N-terminal fragment. The protein is Genome polyprotein of Coxsackievirus B4 (strain JVB / Benschoten / New York/51).